The following is a 190-amino-acid chain: Xanthine phosphoribosyltransferase (190 aa).

Positions 20 and 27 each coordinate xanthine. 128–132 provides a ligand contact to 5-phospho-alpha-D-ribose 1-diphosphate; the sequence is ANGKA. Lys-156 is a binding site for xanthine.

Belongs to the purine/pyrimidine phosphoribosyltransferase family. Xpt subfamily. As to quaternary structure, homodimer.

The protein localises to the cytoplasm. It carries out the reaction XMP + diphosphate = xanthine + 5-phospho-alpha-D-ribose 1-diphosphate. It participates in purine metabolism; XMP biosynthesis via salvage pathway; XMP from xanthine: step 1/1. Its function is as follows. Converts the preformed base xanthine, a product of nucleic acid breakdown, to xanthosine 5'-monophosphate (XMP), so it can be reused for RNA or DNA synthesis. The sequence is that of Xanthine phosphoribosyltransferase from Pseudomonas fluorescens (strain SBW25).